Reading from the N-terminus, the 108-residue chain is Nucleoid-associated protein BARBAKC583_1239 (108 aa).

Belongs to the YbaB/EbfC family. In terms of assembly, homodimer.

The protein localises to the cytoplasm. The protein resides in the nucleoid. Functionally, binds to DNA and alters its conformation. May be involved in regulation of gene expression, nucleoid organization and DNA protection. In Bartonella bacilliformis (strain ATCC 35685 / KC583 / Herrer 020/F12,63), this protein is Nucleoid-associated protein BARBAKC583_1239.